The sequence spans 499 residues: Ribose import ATP-binding protein RbsA (499 aa).

ABC transporter domains lie at 3 to 240 and 250 to 494; these read VEMT…VGRA and LTPG…TGGD. 35–42 lines the ATP pocket; it reads GENGAGKS.

It belongs to the ABC transporter superfamily. Ribose importer (TC 3.A.1.2.1) family. The complex is composed of an ATP-binding protein (RbsA), two transmembrane proteins (RbsC) and a solute-binding protein (RbsB).

The protein localises to the cell membrane. It carries out the reaction D-ribose(out) + ATP + H2O = D-ribose(in) + ADP + phosphate + H(+). In terms of biological role, part of the ABC transporter complex RbsABC involved in ribose import. Responsible for energy coupling to the transport system. The chain is Ribose import ATP-binding protein RbsA from Halalkalibacterium halodurans (strain ATCC BAA-125 / DSM 18197 / FERM 7344 / JCM 9153 / C-125) (Bacillus halodurans).